The chain runs to 202 residues: dITP/XTP pyrophosphatase (202 aa).

Position 9–14 (9–14) interacts with substrate; that stretch reads TGNKGK. Asp73 functions as the Proton acceptor in the catalytic mechanism. Mg(2+) is bound at residue Asp73. Substrate-binding positions include Ser74, 158-161, Lys181, and 186-187; these read FGYD and HR.

The protein belongs to the HAM1 NTPase family. In terms of assembly, homodimer. The cofactor is Mg(2+).

It carries out the reaction XTP + H2O = XMP + diphosphate + H(+). The catalysed reaction is dITP + H2O = dIMP + diphosphate + H(+). The enzyme catalyses ITP + H2O = IMP + diphosphate + H(+). Functionally, pyrophosphatase that catalyzes the hydrolysis of nucleoside triphosphates to their monophosphate derivatives, with a high preference for the non-canonical purine nucleotides XTP (xanthosine triphosphate), dITP (deoxyinosine triphosphate) and ITP. Seems to function as a house-cleaning enzyme that removes non-canonical purine nucleotides from the nucleotide pool, thus preventing their incorporation into DNA/RNA and avoiding chromosomal lesions. The protein is dITP/XTP pyrophosphatase of Lactobacillus acidophilus (strain ATCC 700396 / NCK56 / N2 / NCFM).